Here is a 989-residue protein sequence, read N- to C-terminus: MRGPLEPDSADRPSLAILMREAPVLGDAETAEIKLSQATESLSPAERAALDGLLSRAPIARAVCLGMAEGSPFLLDLVRAEPTRLLRVLSDDPHAHLARLMADCAATAASGSEAEVMRALRRMRSEAALLIALADMGGAFDLIAVTAALTDVADAALRAALAFLLGDAARAGRLKPQDAADPAVGCGLAVIAMGKHGARELNYSSDIDLVVVFDREKAPLAEEVSAAPFFVKITQGLVRLLQERTADGYVLRVDLRLRPDPGSTAVALSTAAALDYYEREGATWERAAYIKARPVAGDLAVGRTFLAELSPFVWRRGLDFQAIADVHAMKREIHAFRGHDVVAVEGHNVKLGRGGIREVEFFVQTQQLIAGGRDPLLRNSRTLEALDALTAHRWIEPSVRDALAEAYVFLRRVEHRIQMVADAQTHSLPESRPAMEGFARFMGYPDRDAFAAALVTRLQTVQTHYANLFEDVAPPAVLDADLMFPPDENDRKTLAALSRLGFRDPAAASGMVRRWLSGGPRALKGESARAHLARIVPLMLEALARGGDPDGALAAADRFLSDLPGPQLLTALDRHPDLVRLLATILTAAPRLGETLARRPSLTDALLDPAFFDVLPDEAGLTAHLEHLLDTADTDEEQLDRARRFRQEQHVLIGVRIASGTLEAARAGEAYATLAEVIIRALHRRVWARFREAHGTIAGAQTAVLAMGKLGGREMTAGSDLDLIVLYDFDADADPTSDGARPLTGAQYFARFTQRLVTALTSLTNAGKLYDVDLRLRPSGRSGPVATRLASFATYQREEAWTWEHMALTRARVIAAEPEFGAKVRDVICAVMGQPRDPRRLAGDILDMRQSIAAEKGEGDMWNLKHAAGGQVDVEFLAQYLVLAHACAHPEIVDTATARVLATAARLGLLEPEDAHVLQRACRLYQNLTQVLRLAVDAHIVPADASPALRALLARAGEMPDFTTLDADLADTQAKVRTIFERILETAAE.

Positions 1-473 (MRGPLEPDSA…HYANLFEDVA (473 aa)) are adenylyl removase. An adenylyl transferase region spans residues 479-989 (DADLMFPPDE…FERILETAAE (511 aa)).

It belongs to the GlnE family. The cofactor is Mg(2+).

The catalysed reaction is [glutamine synthetase]-O(4)-(5'-adenylyl)-L-tyrosine + phosphate = [glutamine synthetase]-L-tyrosine + ADP. It catalyses the reaction [glutamine synthetase]-L-tyrosine + ATP = [glutamine synthetase]-O(4)-(5'-adenylyl)-L-tyrosine + diphosphate. Involved in the regulation of glutamine synthetase GlnA, a key enzyme in the process to assimilate ammonia. When cellular nitrogen levels are high, the C-terminal adenylyl transferase (AT) inactivates GlnA by covalent transfer of an adenylyl group from ATP to specific tyrosine residue of GlnA, thus reducing its activity. Conversely, when nitrogen levels are low, the N-terminal adenylyl removase (AR) activates GlnA by removing the adenylyl group by phosphorolysis, increasing its activity. The regulatory region of GlnE binds the signal transduction protein PII (GlnB) which indicates the nitrogen status of the cell. This chain is Bifunctional glutamine synthetase adenylyltransferase/adenylyl-removing enzyme, found in Xanthobacter autotrophicus (strain ATCC BAA-1158 / Py2).